The primary structure comprises 222 residues: Histone H1.5 (222 aa).

Low complexity predominate over residues M1 to E16. The disordered stretch occupies residues M1 to G55. S2 carries the N-acetylserine modification. The residue at position 2 (S2) is a Phosphoserine. Position 17 is an N6-acetyllysine (K17). Residue S18 is modified to Phosphoserine. The segment covering A20 to A34 has biased composition (basic residues). K26 is subject to N6-methyllysine. K33 is subject to N6-(beta-hydroxybutyryl)lysine; alternate. Residue K33 is modified to N6-succinyllysine; alternate. T35 is modified (phosphothreonine). Positions T35–K108 constitute an H15 domain. Residue K45 is modified to N6-acetyllysine. Position 51 is an N6-(beta-hydroxybutyryl)lysine (K51). Residue R53 is modified to Citrulline. The residue at position 63 (K63) is an N6-(beta-hydroxybutyryl)lysine. An N6-acetyllysine modification is found at K74. K84, K89, and K105 each carry N6-(beta-hydroxybutyryl)lysine. A disordered region spans residues Q94–K222. The span at K118–K129 shows a compositional bias: basic residues. Phosphothreonine occurs at positions 134 and 151. Positions K136–K157 are enriched in basic residues. K164 is subject to N6-acetyllysine. Basic residues predominate over residues K165–T183. A phosphoserine mark is found at S169 and S185. A compositionally biased stretch (basic residues) spans K190–K222.

It belongs to the histone H1/H5 family. In terms of assembly, interacts with MSX1. Post-translationally, H1 histones are progressively phosphorylated during the cell cycle, becoming maximally phosphorylated during late G2 phase and M phase, and being dephosphorylated sharply thereafter. In terms of processing, citrullination at Arg-53 (H1R54ci) by PADI4 takes place within the DNA-binding site of H1 and results in its displacement from chromatin and global chromatin decondensation, thereby promoting pluripotency and stem cell maintenance.

The protein localises to the nucleus. It localises to the chromosome. Its function is as follows. Histone H1 protein binds to linker DNA between nucleosomes forming the macromolecular structure known as the chromatin fiber. Histones H1 are necessary for the condensation of nucleosome chains into higher-order structured fibers. Also acts as a regulator of individual gene transcription through chromatin remodeling, nucleosome spacing and DNA methylation. The polypeptide is Histone H1.5 (H1-5) (Rattus norvegicus (Rat)).